The chain runs to 462 residues: Tubulin alpha-4 chain (462 aa).

Residues Gln11, Glu82, Ser151, Gly155, Thr156, Thr190, Asn217, and Asn239 each contribute to the GTP site. Glu82 lines the Mg(2+) pocket. The active site involves Glu265.

Belongs to the tubulin family. In terms of assembly, dimer of alpha and beta chains. A typical microtubule is a hollow water-filled tube with an outer diameter of 25 nm and an inner diameter of 15 nM. Alpha-beta heterodimers associate head-to-tail to form protofilaments running lengthwise along the microtubule wall with the beta-tubulin subunit facing the microtubule plus end conferring a structural polarity. Microtubules usually have 13 protofilaments but different protofilament numbers can be found in some organisms and specialized cells. Mg(2+) serves as cofactor.

Its subcellular location is the cytoplasm. The protein resides in the cytoskeleton. It carries out the reaction GTP + H2O = GDP + phosphate + H(+). Functionally, tubulin is the major constituent of microtubules, a cylinder consisting of laterally associated linear protofilaments composed of alpha- and beta-tubulin heterodimers. Microtubules grow by the addition of GTP-tubulin dimers to the microtubule end, where a stabilizing cap forms. Below the cap, tubulin dimers are in GDP-bound state, owing to GTPase activity of alpha-tubulin. The chain is Tubulin alpha-4 chain (alphaTub67C) from Drosophila melanogaster (Fruit fly).